We begin with the raw amino-acid sequence, 118 residues long: Small ribosomal subunit protein uS13 (118 aa).

Residues 94–118 (SLPLRGQRTKTNARTRKGPRKPIRK) form a disordered region.

This sequence belongs to the universal ribosomal protein uS13 family. Part of the 30S ribosomal subunit. Forms a loose heterodimer with protein S19. Forms two bridges to the 50S subunit in the 70S ribosome.

Its function is as follows. Located at the top of the head of the 30S subunit, it contacts several helices of the 16S rRNA. In the 70S ribosome it contacts the 23S rRNA (bridge B1a) and protein L5 of the 50S subunit (bridge B1b), connecting the 2 subunits; these bridges are implicated in subunit movement. Contacts the tRNAs in the A and P-sites. This chain is Small ribosomal subunit protein uS13, found in Shewanella woodyi (strain ATCC 51908 / MS32).